The following is a 299-amino-acid chain: Taste receptor type 2 member 16 (299 aa).

The Extracellular portion of the chain corresponds to 1–5; sequence MVPTQ. A helical membrane pass occupies residues 6 to 26; it reads VTIFSIIMYVLESLVIIVQSC. At 27 to 44 the chain is on the cytoplasmic side; that stretch reads TTVAVLFREWMHFQRLSP. A helical membrane pass occupies residues 45 to 65; it reads VEIILISLGISHFCLQWTSML. At 66–82 the chain is on the extracellular side; that stretch reads YNFGTYSRPVLLFWKVS. The chain crosses the membrane as a helical span at residues 83-103; sequence VVWEFMNVLTFWLTSLLAVLY. At 104–125 the chain is on the cytoplasmic side; the sequence is CVKVSSFSHPVFLWLRLKILKL. A helical membrane pass occupies residues 126–146; the sequence is VLWLLLGALIASCLSIIPSVV. At 147–183 the chain is on the extracellular side; the sequence is KYHIQMELLTLDHLPKNSSLILRLQMFEWYFSNPFKM. N163 carries N-linked (GlcNAc...) asparagine glycosylation. A helical membrane pass occupies residues 184 to 204; it reads IGFGVPFLVFLISIILLTVSL. The Cytoplasmic portion of the chain corresponds to 205–233; sequence VQHWGQMKHYSSSSSSLRAQCTVLKSLAT. The chain crosses the membrane as a helical span at residues 234-254; it reads FFIFFTSYFLTIVVSFIGTVF. The Extracellular segment spans residues 255-258; the sequence is DKKS. Residues 259–279 form a helical membrane-spanning segment; sequence WFWVCEAVIYGLVCIHFTSLM. The Cytoplasmic segment spans residues 280-299; the sequence is MSNPTLKKALRLQFWSPESS.

It belongs to the G-protein coupled receptor T2R family. Interacts with RTP3 and RTP4. As to expression, expressed in subsets of taste receptor cells of the tongue and palate epithelium and exclusively in gustducin-positive cells. Expressed in the antrum and fundus (part of the stomach), duodenum and in gastric endocrine cells.

The protein resides in the cell membrane. In terms of biological role, gustducin-coupled receptor implicated in the perception of bitter compounds in the oral cavity and the gastrointestinal tract. Signals through PLCB2 and the calcium-regulated cation channel TRPM5. The polypeptide is Taste receptor type 2 member 16 (Tas2r16) (Rattus norvegicus (Rat)).